Consider the following 210-residue polypeptide: Shikimate kinase (210 aa).

34 to 39 (GVGKSV) contacts ATP. Serine 38 contributes to the Mg(2+) binding site. Aspartate 56, arginine 80, and glycine 102 together coordinate substrate. Arginine 140 is a binding site for ATP. A substrate-binding site is contributed by arginine 159.

The protein belongs to the shikimate kinase family. As to quaternary structure, monomer. It depends on Mg(2+) as a cofactor.

Its subcellular location is the cytoplasm. The catalysed reaction is shikimate + ATP = 3-phosphoshikimate + ADP + H(+). It functions in the pathway metabolic intermediate biosynthesis; chorismate biosynthesis; chorismate from D-erythrose 4-phosphate and phosphoenolpyruvate: step 5/7. Functionally, catalyzes the specific phosphorylation of the 3-hydroxyl group of shikimic acid using ATP as a cosubstrate. This chain is Shikimate kinase, found in Bartonella henselae (strain ATCC 49882 / DSM 28221 / CCUG 30454 / Houston 1) (Rochalimaea henselae).